Consider the following 276-residue polypeptide: Putative non-heme chloroperoxidase (276 aa).

The region spanning 26-263 (PIVLIHGFPL…GGPHAINWTH (238 aa)) is the AB hydrolase-1 domain. Catalysis depends on residues S99, D228, and H257.

This sequence belongs to the AB hydrolase superfamily. Bacterial non-heme haloperoxidase / perhydrolase family.

This chain is Putative non-heme chloroperoxidase, found in Synechocystis sp. (strain ATCC 27184 / PCC 6803 / Kazusa).